The following is a 329-amino-acid chain: 4-hydroxythreonine-4-phosphate dehydrogenase (329 aa).

His136 and Thr137 together coordinate substrate. His166, His211, and His266 together coordinate a divalent metal cation. The substrate site is built by Lys274, Asn283, and Arg292.

It belongs to the PdxA family. In terms of assembly, homodimer. The cofactor is Zn(2+). It depends on Mg(2+) as a cofactor. Co(2+) is required as a cofactor.

Its subcellular location is the cytoplasm. The enzyme catalyses 4-(phosphooxy)-L-threonine + NAD(+) = 3-amino-2-oxopropyl phosphate + CO2 + NADH. Its pathway is cofactor biosynthesis; pyridoxine 5'-phosphate biosynthesis; pyridoxine 5'-phosphate from D-erythrose 4-phosphate: step 4/5. Catalyzes the NAD(P)-dependent oxidation of 4-(phosphooxy)-L-threonine (HTP) into 2-amino-3-oxo-4-(phosphooxy)butyric acid which spontaneously decarboxylates to form 3-amino-2-oxopropyl phosphate (AHAP). This chain is 4-hydroxythreonine-4-phosphate dehydrogenase, found in Citrobacter koseri (strain ATCC BAA-895 / CDC 4225-83 / SGSC4696).